A 642-amino-acid polypeptide reads, in one-letter code: Zinc finger protein 14 (642 aa).

The 73-residue stretch at 4–76 (VSFEDVAVNF…MVERLCESRK (73 aa)) folds into the KRAB domain. The C2H2-type 1 zinc finger occupies 103–125 (HECSFCGRDFMHHSSLNRHMRSH). The segment at 141 to 163 (RKHKAVEKTFSYHHCFRKHERTH) adopts a C2H2-type 2; degenerate zinc-finger fold. The C2H2-type 3 zinc-finger motif lies at 169-191 (YECKQCGKAFIYYQPFQRHERTH). The C2H2-type 4; atypical zinc finger occupies 197 to 217 (YECKQCGKTFIYYQSFQQHAH). 15 consecutive C2H2-type zinc fingers follow at residues 223–245 (YECK…ERTH), 251–273 (YECK…ERTH), 279–301 (YKCK…KRTH), 307–329 (YECK…VITH), 335–357 (YKCK…ERTH), 363–385 (YECK…ERTH), 391–413 (YECK…ETTH), 419–441 (YECK…ERTH), 447–469 (YECK…ERSH), 475–497 (YECK…ERTH), 503–525 (YECK…EKIH), 531–553 (FECK…ERTH), 559–581 (YQCK…ERTH), 587–609 (YRCK…ERSH), and 615–637 (YECK…ERTH).

It belongs to the krueppel C2H2-type zinc-finger protein family.

The protein resides in the nucleus. May be involved in transcriptional regulation. The chain is Zinc finger protein 14 (ZNF14) from Pongo abelii (Sumatran orangutan).